Consider the following 475-residue polypeptide: BTB/POZ domain-containing protein 10 (475 aa).

The disordered stretch occupies residues M1–K144. Basic residues predominate over residues L22–K31. The span at G57–E80 shows a compositional bias: basic and acidic residues. Residues S81 to T94 show a composition bias toward polar residues. Positions H97 to S107 are enriched in basic and acidic residues. Low complexity predominate over residues S108 to K144. The tract at residues S146–L475 is interaction with AKT family members. Positions E167 to D241 constitute a BTB domain. Residues E451–L475 are disordered.

As to quaternary structure, interacts (via C-terminal 330-amino-acid region) with AKT1; AKT2 and AKT3. Interacts with PPP2CA and PPP1CA. Ubiquitously expressed (at protein level).

It is found in the nucleus. The protein resides in the cytoplasm. In terms of biological role, plays a major role as an activator of AKT family members by inhibiting PPP2CA-mediated dephosphorylation, thereby keeping AKTs activated. Plays a role in preventing motor neuronal death and in accelerating the growth of pancreatic beta cells. This chain is BTB/POZ domain-containing protein 10 (Btbd10), found in Mus musculus (Mouse).